We begin with the raw amino-acid sequence, 451 residues long: Phosphoglucosamine mutase (451 aa).

The Phosphoserine intermediate role is filled by Ser107. The Mg(2+) site is built by Ser107, Asp246, Asp248, and Asp250. Ser107 is modified (phosphoserine).

This sequence belongs to the phosphohexose mutase family. The cofactor is Mg(2+). Post-translationally, activated by phosphorylation.

The enzyme catalyses alpha-D-glucosamine 1-phosphate = D-glucosamine 6-phosphate. Catalyzes the conversion of glucosamine-6-phosphate to glucosamine-1-phosphate. This chain is Phosphoglucosamine mutase, found in Burkholderia multivorans (strain ATCC 17616 / 249).